The following is a 66-amino-acid chain: Large ribosomal subunit protein uL29 (66 aa).

Belongs to the universal ribosomal protein uL29 family.

This chain is Large ribosomal subunit protein uL29, found in Geobacillus kaustophilus (strain HTA426).